The following is a 366-amino-acid chain: Dual-specificity RNA methyltransferase RlmN (366 aa).

E91 acts as the Proton acceptor in catalysis. The 237-residue stretch at E97–D333 folds into the Radical SAM core domain. C104 and C338 are disulfide-bonded. [4Fe-4S] cluster is bound by residues C111, C115, and C118. S-adenosyl-L-methionine contacts are provided by residues G164 to E165, S196, S218 to H220, and N295. C338 functions as the S-methylcysteine intermediate in the catalytic mechanism.

Belongs to the radical SAM superfamily. RlmN family. The cofactor is [4Fe-4S] cluster.

The protein resides in the cytoplasm. The enzyme catalyses adenosine(2503) in 23S rRNA + 2 reduced [2Fe-2S]-[ferredoxin] + 2 S-adenosyl-L-methionine = 2-methyladenosine(2503) in 23S rRNA + 5'-deoxyadenosine + L-methionine + 2 oxidized [2Fe-2S]-[ferredoxin] + S-adenosyl-L-homocysteine. It catalyses the reaction adenosine(37) in tRNA + 2 reduced [2Fe-2S]-[ferredoxin] + 2 S-adenosyl-L-methionine = 2-methyladenosine(37) in tRNA + 5'-deoxyadenosine + L-methionine + 2 oxidized [2Fe-2S]-[ferredoxin] + S-adenosyl-L-homocysteine. Specifically methylates position 2 of adenine 2503 in 23S rRNA and position 2 of adenine 37 in tRNAs. m2A2503 modification seems to play a crucial role in the proofreading step occurring at the peptidyl transferase center and thus would serve to optimize ribosomal fidelity. The polypeptide is Dual-specificity RNA methyltransferase RlmN (Laribacter hongkongensis (strain HLHK9)).